Reading from the N-terminus, the 892-residue chain is Alanine--tRNA ligase (892 aa).

Zn(2+) contacts are provided by His-596, His-600, Cys-700, and His-704.

Belongs to the class-II aminoacyl-tRNA synthetase family. It depends on Zn(2+) as a cofactor.

The protein resides in the cytoplasm. The catalysed reaction is tRNA(Ala) + L-alanine + ATP = L-alanyl-tRNA(Ala) + AMP + diphosphate. Its function is as follows. Catalyzes the attachment of alanine to tRNA(Ala) in a two-step reaction: alanine is first activated by ATP to form Ala-AMP and then transferred to the acceptor end of tRNA(Ala). Also edits incorrectly charged Ser-tRNA(Ala) and Gly-tRNA(Ala) via its editing domain. The chain is Alanine--tRNA ligase from Methanococcus maripaludis (strain C5 / ATCC BAA-1333).